The primary structure comprises 331 residues: Beta-ketoacyl-[acyl-carrier-protein] synthase III (331 aa).

Residues Cys115 and His255 contribute to the active site. Positions 256 to 260 (QANFR) are ACP-binding. The active site involves Asn285.

It belongs to the thiolase-like superfamily. FabH family. Homodimer.

The protein resides in the cytoplasm. The catalysed reaction is malonyl-[ACP] + acetyl-CoA + H(+) = 3-oxobutanoyl-[ACP] + CO2 + CoA. It functions in the pathway lipid metabolism; fatty acid biosynthesis. Functionally, catalyzes the condensation reaction of fatty acid synthesis by the addition to an acyl acceptor of two carbons from malonyl-ACP. Catalyzes the first condensation reaction which initiates fatty acid synthesis and may therefore play a role in governing the total rate of fatty acid production. Possesses both acetoacetyl-ACP synthase and acetyl transacylase activities. Its substrate specificity determines the biosynthesis of branched-chain and/or straight-chain of fatty acids. The polypeptide is Beta-ketoacyl-[acyl-carrier-protein] synthase III (Helicobacter pylori (strain J99 / ATCC 700824) (Campylobacter pylori J99)).